A 421-amino-acid chain; its full sequence is Queuine tRNA-ribosyltransferase accessory subunit 2 (421 aa).

Residues cysteine 328, cysteine 330, cysteine 333, and histidine 359 each contribute to the Zn(2+) site.

It belongs to the queuine tRNA-ribosyltransferase family. QTRT2 subfamily. Heterodimer of a catalytic subunit and an accessory subunit. Zn(2+) is required as a cofactor.

It is found in the cytoplasm. In terms of biological role, non-catalytic subunit of the queuine tRNA-ribosyltransferase (TGT) that catalyzes the base-exchange of a guanine (G) residue with queuine (Q) at position 34 (anticodon wobble position) in tRNAs with GU(N) anticodons (tRNA-Asp, -Asn, -His and -Tyr), resulting in the hypermodified nucleoside queuosine (7-(((4,5-cis-dihydroxy-2-cyclopenten-1-yl)amino)methyl)-7-deazaguanosine). This chain is Queuine tRNA-ribosyltransferase accessory subunit 2, found in Aedes aegypti (Yellowfever mosquito).